A 366-amino-acid chain; its full sequence is G-protein coupled receptor 183 (366 aa).

The Extracellular segment spans residues 1 to 37; it reads MQVMRTFNQPPTSSHPTPTLNDSDTCITLYNHRGYAR. The N-linked (GlcNAc...) asparagine glycan is linked to Asn-21. A helical membrane pass occupies residues 38–63; that stretch reads VLMPLFYCIVFFVGLLGNALAFHIIR. Over 64-83 the chain is Cytoplasmic; that stretch reads PNVKKINSTTLYSANLVISD. A helical transmembrane segment spans residues 84 to 101; the sequence is ILFTLSLPLRIIYYALGF. Topologically, residues 102-111 are extracellular; that stretch reads HWPLGETLCK. Cys-110 and Cys-188 are disulfide-bonded. Residues 112 to 133 traverse the membrane as a helical segment; that stretch reads IVGLIFYINTYAGVNFMTCLSV. The Cytoplasmic portion of the chain corresponds to 134 to 155; it reads DRFIAVVLPLRFARFRKVSNVR. A helical transmembrane segment spans residues 156–174; the sequence is YICVGVWLLVLMQTLPLLS. Over 175-199 the chain is Extracellular; sequence MPMTNEEPDGFITCMEYPNFEPVPN. The chain crosses the membrane as a helical span at residues 200-222; that stretch reads ISYILIGAVFLGYGVPVVTILVC. The Cytoplasmic portion of the chain corresponds to 223–248; it reads YSILCCKLRLAAKANQLTDKSGRSQK. The helical transmembrane segment at 249 to 272 threads the bilayer; that stretch reads AIGVICCVSLVFVVCFSPYHIDLL. Over 273 to 292 the chain is Extracellular; the sequence is QYMIRKLIYTPDCAELTAFQ. The helical transmembrane segment at 293–317 threads the bilayer; that stretch reads ISLHFTVCLMNLNSCLDPFIYFFAC. Topologically, residues 318–366 are cytoplasmic; it reads KGYKTKVLKILKRQVSVSFSSAARTLPEGLSRDISDGNKIHLNSTRHKE.

The protein belongs to the G-protein coupled receptor 1 family.

The protein localises to the cell membrane. Its function is as follows. G-protein coupled receptor expressed in lymphocytes that acts as a chemotactic receptor for B-cells, T-cells, splenic dendritic cells, monocytes/macrophages and astrocytes. Receptor for oxysterol 7-alpha,25-dihydroxycholesterol (7-alpha,25-OHC) and other related oxysterols. Mediates cell positioning and movement of a number of cells by binding the 7-alpha,25-OHC ligand that forms a chemotactic gradient. Binding of 7-alpha,25-OHC mediates the correct localization of B-cells during humoral immune responses. The chain is G-protein coupled receptor 183 (gpr183) from Salmo salar (Atlantic salmon).